A 608-amino-acid chain; its full sequence is Serine/threonine-protein kinase SSN3 (608 aa).

Residues 1–72 (MSYSSASFRK…PGTVGTRTSI (72 aa)) are disordered. Residues 17–47 (SQPSQTTTTTTSANQPQSQSQQQPLQQSQQQ) show a composition bias toward low complexity. The span at 49–59 (LHMKPNPHIPH) shows a compositional bias: basic residues. A Protein kinase domain is found at 104 to 492 (YQIMGYIAAG…ADQALLHPYF (389 aa)). ATP-binding positions include 110-118 (IAAGTYGKV) and K182. D307 functions as the Proton acceptor in the catalytic mechanism. Residues 523 to 608 (MTTAANNNNN…LPGGIRKKRG (86 aa)) are disordered. Residues 528-583 (NNNNNNNNNNNNNNNNNNNNNNNNNNNSGHQLSQQQNVQIQQVHQMQQQIHSQQLQ) are compositionally biased toward low complexity.

The protein belongs to the protein kinase superfamily. CMGC Ser/Thr protein kinase family. CDC2/CDKX subfamily. In terms of assembly, component of the SRB8-11 complex, a regulatory module of the Mediator complex. The cofactor is Mg(2+).

It is found in the nucleus. It catalyses the reaction L-seryl-[protein] + ATP = O-phospho-L-seryl-[protein] + ADP + H(+). The enzyme catalyses L-threonyl-[protein] + ATP = O-phospho-L-threonyl-[protein] + ADP + H(+). The catalysed reaction is [DNA-directed RNA polymerase] + ATP = phospho-[DNA-directed RNA polymerase] + ADP + H(+). In terms of biological role, component of the SRB8-11 complex. The SRB8-11 complex is a regulatory module of the Mediator complex which is itself involved in regulation of basal and activated RNA polymerase II-dependent transcription. The SRB8-11 complex may be involved in the transcriptional repression of a subset of genes regulated by Mediator. It may inhibit the association of the Mediator complex with RNA polymerase II to form the holoenzyme complex. The SRB8-11 complex phosphorylates the C-terminal domain (CTD) of the largest subunit of RNA polymerase II. The protein is Serine/threonine-protein kinase SSN3 (SSN3) of Candida albicans (strain SC5314 / ATCC MYA-2876) (Yeast).